The chain runs to 259 residues: Indole-3-glycerol phosphate synthase (259 aa).

This sequence belongs to the TrpC family.

The enzyme catalyses 1-(2-carboxyphenylamino)-1-deoxy-D-ribulose 5-phosphate + H(+) = (1S,2R)-1-C-(indol-3-yl)glycerol 3-phosphate + CO2 + H2O. The protein operates within amino-acid biosynthesis; L-tryptophan biosynthesis; L-tryptophan from chorismate: step 4/5. In Dehalococcoides mccartyi (strain ATCC BAA-2100 / JCM 16839 / KCTC 5957 / BAV1), this protein is Indole-3-glycerol phosphate synthase.